The primary structure comprises 276 residues: Rhomboid protease GlpG (276 aa).

6 helical membrane-spanning segments follow: residues 94–114, 142–162, 169–189, 192–212, 229–249, and 250–270; these read GPVT…MQIL, ALMH…WYLG, LGSG…GYVQ, FSGP…GYVW, LIIF…GMSM, and ANGA…VDSL. The Nucleophile role is filled by serine 201. The active site involves histidine 254.

It belongs to the peptidase S54 family.

Its subcellular location is the cell inner membrane. It catalyses the reaction Cleaves type-1 transmembrane domains using a catalytic dyad composed of serine and histidine that are contributed by different transmembrane domains.. In terms of biological role, rhomboid-type serine protease that catalyzes intramembrane proteolysis. This chain is Rhomboid protease GlpG, found in Escherichia coli O157:H7.